The chain runs to 267 residues: MSAGSFSTEAAKFSFSPILNKTFGFLTNRDTRELLMKWSMNGRITAQAFRYDECFQPYQKNDFVWAFFQDPDVLSHLKIVSENSGQWVTLGTKVKKVDVQEILCSQLSMSLFDCLYSEGIVRESGHICKCLDEYLDDFTISDELRKVLLLDDCEKHDVFSQSDREQFLFLLFKHLCLGGAICQFEDTIGPYLETTKSIYKDLLSVQKDPETKQIRIISTVFKVSAYDENGMCYPSGRPHQQTFAYLIVDPLKRHVYVLYHCFGGGAF.

It belongs to the CFAP300 family.

The protein localises to the cytoplasm. It is found in the cytoskeleton. Its subcellular location is the cilium axoneme. Cilium- and flagellum-specific protein that plays a role in axonemal structure organization and motility. May play a role in outer and inner dynein arm assembly. This is Cilia- and flagella-associated protein 300 from Xenopus tropicalis (Western clawed frog).